Consider the following 499-residue polypeptide: Lysine--tRNA ligase (499 aa).

Glu409 and Glu416 together coordinate Mg(2+).

It belongs to the class-II aminoacyl-tRNA synthetase family. As to quaternary structure, homodimer. Mg(2+) serves as cofactor.

It localises to the cytoplasm. It carries out the reaction tRNA(Lys) + L-lysine + ATP = L-lysyl-tRNA(Lys) + AMP + diphosphate. The sequence is that of Lysine--tRNA ligase from Pseudomonas fluorescens (strain Pf0-1).